A 461-amino-acid polypeptide reads, in one-letter code: Fumarate hydratase class II (461 aa).

Residues 99 to 101, Arg127, 130 to 133, 140 to 142, and Thr188 contribute to the substrate site; these read SGT, HPND, and SSN. His189 serves as the catalytic Proton donor/acceptor. Ser319 is a catalytic residue. Substrate is bound by residues Ser320 and 325 to 327; that span reads KVN.

It belongs to the class-II fumarase/aspartase family. Fumarase subfamily. In terms of assembly, homotetramer.

The protein resides in the cytoplasm. It catalyses the reaction (S)-malate = fumarate + H2O. The protein operates within carbohydrate metabolism; tricarboxylic acid cycle; (S)-malate from fumarate: step 1/1. Involved in the TCA cycle. Catalyzes the stereospecific interconversion of fumarate to L-malate. In Chromobacterium violaceum (strain ATCC 12472 / DSM 30191 / JCM 1249 / CCUG 213 / NBRC 12614 / NCIMB 9131 / NCTC 9757 / MK), this protein is Fumarate hydratase class II.